Consider the following 264-residue polypeptide: MDLGDNELTLTPIPGKSGKAYMGSYPDGKRIFVKMNTSPILPGLAREQIAPQLLWSRRLADGRDMCAQEWLTGKILTPYDMNRKQIVNILTRLHRSRPLMTQLSRLGYAMETPVDLLQSWQETAPDALRKNHFISEVMADLRQTIPGFREDHATIVHGDVRHSNWIETDSGLIYLVDWDSVRLTDRMFDVAHMLCHYISEHQWKEWLTYYGYKYNQTVLSKLYWYGQLSYLSQISKYYMNQDLENVNREIHGLRHFRDKYGKRR.

Residues F32, W70, and G73 each contribute to the ATP site. Positions 157-164 match the Brenner's motif [HXDhX3N] motif; sequence HGDVRHSN. Catalysis depends on D159, which acts as the Proton acceptor. An APH motif is present at residues 173–196; that stretch reads IYLVDWDSVRLTDRMFDVAHMLCH.

The protein belongs to the aminoglycoside phosphotransferase family. As to quaternary structure, monomer in solution. Interacts with DnaA (via domains I (1-82) and III (111-326)). Interacts with DnaB. Interacts with FtsZ; the interaction is direct and ensures correct localization during the cell cycle.

The protein resides in the cytoplasm. It carries out the reaction D-ribose + ATP = D-ribose 5-phosphate + ADP + H(+). The catalysed reaction is 2-deoxy-D-ribose + ATP = 2-deoxy-D-ribose 5-phosphate + ADP + H(+). Plays a role in cell cycle regulation and chromosome integrity. Activates DnaA-dependent chromosomal DNA replication initiation ensuring that the chromosome is replicated at the right time during the cell cycle. May regulate replication initiation through phosphorylation of a possible second messenger or metabolite, and by interacting with replication initiation proteins. Has ATPase activity with D-ribose and 2-deoxy-D-ribose in vitro, but not with choline. Involved in DNA damage response. This Streptococcus pneumoniae serotype 2 (strain D39 / NCTC 7466) protein is Cell cycle regulator CcrZ.